Consider the following 757-residue polypeptide: 5-methyltetrahydropteroyltriglutamate--homocysteine methyltransferase (757 aa).

Residues 17–20 (RELK) and Lys-117 each bind 5-methyltetrahydropteroyltri-L-glutamate. Residues 434-436 (IGS) and Glu-487 contribute to the L-homocysteine site. Residues 434 to 436 (IGS) and Glu-487 each bind L-methionine. 5-methyltetrahydropteroyltri-L-glutamate contacts are provided by residues 518 to 519 (RC) and Trp-564. Asp-602 contributes to the L-homocysteine binding site. Position 602 (Asp-602) interacts with L-methionine. Residue Glu-608 participates in 5-methyltetrahydropteroyltri-L-glutamate binding. The Zn(2+) site is built by His-644, Cys-646, and Glu-668. The active-site Proton donor is the His-697. Cys-729 is a Zn(2+) binding site.

The protein belongs to the vitamin-B12 independent methionine synthase family. Zn(2+) is required as a cofactor.

The catalysed reaction is 5-methyltetrahydropteroyltri-L-glutamate + L-homocysteine = tetrahydropteroyltri-L-glutamate + L-methionine. It participates in amino-acid biosynthesis; L-methionine biosynthesis via de novo pathway; L-methionine from L-homocysteine (MetE route): step 1/1. Its function is as follows. Catalyzes the transfer of a methyl group from 5-methyltetrahydrofolate to homocysteine resulting in methionine formation. The chain is 5-methyltetrahydropteroyltriglutamate--homocysteine methyltransferase from Proteus mirabilis (strain HI4320).